The primary structure comprises 72 residues: DNA-directed RNA polymerase subunit omega (72 aa).

Belongs to the RNA polymerase subunit omega family. The RNAP catalytic core consists of 2 alpha, 1 beta, 1 beta' and 1 omega subunit. When a sigma factor is associated with the core the holoenzyme is formed, which can initiate transcription.

It catalyses the reaction RNA(n) + a ribonucleoside 5'-triphosphate = RNA(n+1) + diphosphate. Its function is as follows. Promotes RNA polymerase assembly. Latches the N- and C-terminal regions of the beta' subunit thereby facilitating its interaction with the beta and alpha subunits. This is DNA-directed RNA polymerase subunit omega from Campylobacter lari (strain RM2100 / D67 / ATCC BAA-1060).